The following is a 301-amino-acid chain: uncharacterized protein (301 aa).

This is an uncharacterized protein from Methanocaldococcus jannaschii (strain ATCC 43067 / DSM 2661 / JAL-1 / JCM 10045 / NBRC 100440) (Methanococcus jannaschii).